A 308-amino-acid polypeptide reads, in one-letter code: Aspartate carbamoyltransferase catalytic subunit (308 aa).

The carbamoyl phosphate site is built by Arg-57 and Thr-58. An L-aspartate-binding site is contributed by Lys-86. Carbamoyl phosphate contacts are provided by Arg-107, His-135, and Gln-138. L-aspartate is bound by residues Arg-167 and Arg-228. Carbamoyl phosphate-binding residues include Leu-267 and Pro-268.

This sequence belongs to the aspartate/ornithine carbamoyltransferase superfamily. ATCase family. In terms of assembly, heterooligomer of catalytic and regulatory chains.

The enzyme catalyses carbamoyl phosphate + L-aspartate = N-carbamoyl-L-aspartate + phosphate + H(+). Its pathway is pyrimidine metabolism; UMP biosynthesis via de novo pathway; (S)-dihydroorotate from bicarbonate: step 2/3. Catalyzes the condensation of carbamoyl phosphate and aspartate to form carbamoyl aspartate and inorganic phosphate, the committed step in the de novo pyrimidine nucleotide biosynthesis pathway. The sequence is that of Aspartate carbamoyltransferase catalytic subunit from Methanosarcina acetivorans (strain ATCC 35395 / DSM 2834 / JCM 12185 / C2A).